The primary structure comprises 494 residues: Smoothelin-like protein 1 (494 aa).

4 stretches are compositionally biased toward basic and acidic residues: residues 1–10 (MEQKEGKLSE), 74–104 (DEVK…KEET), 112–166 (TGRK…KATV), and 179–232 (TGQR…KEEA). The interval 1–348 (MEQKEGKLSE…ARPRGPRAQN (348 aa)) is disordered. A coiled-coil region spans residues 123-145 (KEAEEKESTLASEKQKAEEKEAK). Residues 233-255 (DAKEEAEDAEEAEPGSPSEEQEQ) are compositionally biased toward acidic residues. 2 stretches are compositionally biased toward low complexity: residues 269 to 279 (PSSPEEWPESP) and 302 to 314 (SPSA…SDVP). Residues 324–335 (GEKKEKAPERRV) show a composition bias toward basic and acidic residues. Serine 336 is subject to Phosphoserine. A Calponin-homology (CH) domain is found at 378-484 (GGVKNMLLEW…YIQELYRSLV (107 aa)). A calmodulin-binding region spans residues 476-494 (IQELYRSLVQKGLVKTKKK).

Belongs to the smoothelin family. Interacts with PPP1R12A. Maximal phosphorylation of Ser-336 correlates with maximal relaxation of aorta in response to acetylcholine. In terms of tissue distribution, expressed in striated muscles, specifically in type 2a fibers (at protein level).

Its subcellular location is the cytoplasm. It is found in the myofibril. The protein resides in the sarcomere. The protein localises to the i band. It localises to the m line. Its subcellular location is the nucleus. Functionally, plays a role in the regulation of contractile properties of both striated and smooth muscles. When unphosphorylated, may inhibit myosin dephosphorylation. Phosphorylation at Ser-299 reduces this inhibitory activity. This Homo sapiens (Human) protein is Smoothelin-like protein 1 (SMTNL1).